Reading from the N-terminus, the 330-residue chain is Ribosomal RNA small subunit methyltransferase A (330 aa).

Residues His-29, Leu-31, Gly-56, Glu-77, and Asp-98 each contribute to the S-adenosyl-L-methionine site. Residues 115–158 (PVRSAGLPQAETAPKGLEPAGSSSQQGPRDWLRQTAGAAAPSRG) are disordered. Asn-177 serves as a coordination point for S-adenosyl-L-methionine.

It belongs to the class I-like SAM-binding methyltransferase superfamily. rRNA adenine N(6)-methyltransferase family. RsmA subfamily.

The protein resides in the cytoplasm. The enzyme catalyses adenosine(1518)/adenosine(1519) in 16S rRNA + 4 S-adenosyl-L-methionine = N(6)-dimethyladenosine(1518)/N(6)-dimethyladenosine(1519) in 16S rRNA + 4 S-adenosyl-L-homocysteine + 4 H(+). In terms of biological role, specifically dimethylates two adjacent adenosines (A1518 and A1519) in the loop of a conserved hairpin near the 3'-end of 16S rRNA in the 30S particle. May play a critical role in biogenesis of 30S subunits. The sequence is that of Ribosomal RNA small subunit methyltransferase A from Polaromonas sp. (strain JS666 / ATCC BAA-500).